A 168-amino-acid chain; its full sequence is Protein archease (168 aa).

Alanine 2 carries the N-acetylalanine modification. Ca(2+) contacts are provided by aspartate 39, aspartate 167, and isoleucine 168.

Belongs to the archease family. As to quaternary structure, component of the tRNA-splicing ligase complex.

Its function is as follows. Component of the tRNA-splicing ligase complex required to facilitate the enzymatic turnover of catalytic subunit RTCB. Together with DDX1, acts by facilitating the guanylylation of RTCB, a key intermediate step in tRNA ligation. In Mus musculus (Mouse), this protein is Protein archease (Zbtb8os).